A 320-amino-acid polypeptide reads, in one-letter code: HPr kinase/phosphorylase (320 aa).

Catalysis depends on residues histidine 141 and lysine 162. 156–163 (GHSGLGKS) contributes to the ATP binding site. Residue serine 163 coordinates Mg(2+). The Proton acceptor; for phosphorylation activity. Proton donor; for dephosphorylation activity role is filled by aspartate 180. The segment at 204 to 213 (LEVRGLGILN) is important for the catalytic mechanism of both phosphorylation and dephosphorylation. Residue glutamate 205 coordinates Mg(2+). Arginine 248 is a catalytic residue. The interval 269–274 (PVAVGR) is important for the catalytic mechanism of dephosphorylation.

Belongs to the HPrK/P family. In terms of assembly, homohexamer. It depends on Mg(2+) as a cofactor.

It carries out the reaction [HPr protein]-L-serine + ATP = [HPr protein]-O-phospho-L-serine + ADP + H(+). The enzyme catalyses [HPr protein]-O-phospho-L-serine + phosphate + H(+) = [HPr protein]-L-serine + diphosphate. Functionally, catalyzes the ATP- as well as the pyrophosphate-dependent phosphorylation of a specific serine residue in HPr, a phosphocarrier protein of the phosphoenolpyruvate-dependent sugar phosphotransferase system (PTS). HprK/P also catalyzes the pyrophosphate-producing, inorganic phosphate-dependent dephosphorylation (phosphorolysis) of seryl-phosphorylated HPr (P-Ser-HPr). The protein is HPr kinase/phosphorylase of Neisseria meningitidis serogroup B (strain ATCC BAA-335 / MC58).